Reading from the N-terminus, the 192-residue chain is Zinc finger CCHC domain-containing protein 10 (192 aa).

A CCHC-type zinc finger spans residues 43 to 60 (VRCQKCLEFGHWTYECTG). Positions 89–192 (QSIGETNVER…DEPPKKKKKK (104 aa)) are disordered. 2 stretches are compositionally biased toward low complexity: residues 109–136 (TSSS…SSSS) and 144–179 (SSSS…STDS).

The chain is Zinc finger CCHC domain-containing protein 10 (ZCCHC10) from Homo sapiens (Human).